A 168-amino-acid polypeptide reads, in one-letter code: Small ribosomal subunit protein bS16 (168 aa).

The segment at 110 to 168 is disordered; the sequence is LAEAEGGPSNEATQPKKKKAPAKKAASDIEATADPAGNADKSEPAAEGEDATVAGATEG.

It belongs to the bacterial ribosomal protein bS16 family.

The sequence is that of Small ribosomal subunit protein bS16 from Mycobacterium sp. (strain JLS).